The primary structure comprises 421 residues: Adenosylhomocysteinase (421 aa).

2 residues coordinate substrate: Asp128 and Glu153. 154–156 contributes to the NAD(+) binding site; sequence TTT. Substrate contacts are provided by Lys183 and Asp187. Residues Asn188, 217-222, Glu240, 296-298, and Asn343 contribute to the NAD(+) site; these read GYGWCG and AGH.

The protein belongs to the adenosylhomocysteinase family. Requires NAD(+) as cofactor.

Its subcellular location is the cytoplasm. It catalyses the reaction S-adenosyl-L-homocysteine + H2O = L-homocysteine + adenosine. Its pathway is amino-acid biosynthesis; L-homocysteine biosynthesis; L-homocysteine from S-adenosyl-L-homocysteine: step 1/1. In terms of biological role, may play a key role in the regulation of the intracellular concentration of adenosylhomocysteine. The polypeptide is Adenosylhomocysteinase (Thermococcus kodakarensis (strain ATCC BAA-918 / JCM 12380 / KOD1) (Pyrococcus kodakaraensis (strain KOD1))).